Consider the following 715-residue polypeptide: D-ribulokinase YDR109C (715 aa).

Residues 1–27 form a disordered region; it reads MKSRKRQNNMQNETREPAVLSSQETSI.

Belongs to the FGGY kinase family.

It carries out the reaction D-ribulose + ATP = D-ribulose 5-phosphate + ADP + H(+). Its pathway is carbohydrate metabolism; pentose and glucuronate interconversion. Catalyzes ATP-dependent phosphorylation of D-ribulose at C-5 to form D-ribulose 5-phosphate. Postulated to function in a metabolite repair mechanism by preventing toxic accumulation of free D-ribulose formed by non-specific phosphatase activities. Alternatively, may play a role in regulating D-ribulose 5-phosphate recycling in the pentose phosphate pathway. The polypeptide is D-ribulokinase YDR109C (Saccharomyces cerevisiae (strain ATCC 204508 / S288c) (Baker's yeast)).